The sequence spans 306 residues: Low-density lipoprotein receptor class A domain-containing protein 4 (306 aa).

At 1 to 64 (MPEAGFQATN…PPGIFNSELE (64 aa)) the chain is on the lumenal side. Positions 11–48 (AFTECKFTCTSGKCLYLGSLVCNQQNDCGDNSDEENCL) constitute an LDL-receptor class A domain. Disulfide bonds link Cys-19/Cys-38 and Cys-32/Cys-47. The chain crosses the membrane as a helical span at residues 65–85 (FAQILIIVVVVTVMVVVVVCL). Topologically, residues 86–306 (LNHYKVSTRS…GKDRKPGDLV (221 aa)) are cytoplasmic. Residues 100 to 127 (PNQSQRQEDGLQPEGSLWPSDSSVQRPG) are disordered. Positions 180–183 (PPPY) match the PPxY motif 1 motif. The SMAD interaction motif (SIM) motif lies at 208–211 (PPNR). A PPxY motif 2 motif is present at residues 252-255 (PPTY). The disordered stretch occupies residues 268–306 (FHHQHSNTHRGSRPQFQPNNSEGTIVPIKGKDRKPGDLV). Residues 269–279 (HHQHSNTHRGS) show a composition bias toward basic residues. The span at 281-290 (PQFQPNNSEG) shows a compositional bias: polar residues. The segment covering 296–306 (KGKDRKPGDLV) has biased composition (basic and acidic residues).

This sequence belongs to the PMEPA1 family. As to quaternary structure, interacts with PMEPA1. Interacts (via the SMAD interaction motif) with SMAD2 and SMAD3. In terms of tissue distribution, detected in all tissues tested.

The protein localises to the early endosome membrane. Functionally, functions as a negative regulator of TGF-beta signaling and thereby probably plays a role in cell proliferation, differentiation, apoptosis, motility, extracellular matrix production and immunosuppression. In the canonical TGF-beta pathway, ZFYVE9/SARA recruits the intracellular signal transducer and transcriptional modulators SMAD2 and SMAD3 to the TGF-beta receptor. Phosphorylated by the receptor, SMAD2 and SMAD3 then form a heteromeric complex with SMAD4 that translocates to the nucleus to regulate transcription. Through interaction with SMAD2 and SMAD3, LDLRAD4 may compete with ZFYVE9 and SMAD4 and prevent propagation of the intracellular signal. The sequence is that of Low-density lipoprotein receptor class A domain-containing protein 4 (Ldlrad4) from Mus musculus (Mouse).